Here is a 32-residue protein sequence, read N- to C-terminus: Secreted proteinase (32 aa).

A disordered region spans residues 1–32 (DTANDPKYGSQYAPQKVNADVDQGVXXXHPEL). Aspartate 22 (charge relay system) is an active-site residue.

This sequence belongs to the peptidase S8 family.

It localises to the secreted. The protein is Secreted proteinase of Haloferax mediterranei (Halobacterium mediterranei).